A 233-amino-acid chain; its full sequence is Lysoplasmalogenase TMEM86B (233 aa).

At 1 to 30 (MPCCDPYPWIGLNVGRLSSFPLLKYPQVRR) the chain is on the cytoplasmic side. The helical transmembrane segment at 31–47 (WLAPFIVACSLYFLLWI) threads the bilayer. Topologically, residues 48 to 53 (PEDQPS) are extracellular. Residues 54–75 (WVSALVKCQPILCLVLFLWAVA) form a helical membrane-spanning segment. At 76 to 81 (PGGSYT) the chain is on the cytoplasmic side. The helical transmembrane segment at 82–100 (WLLQGALTCSAVGDACLIW) threads the bilayer. Topologically, residues 101 to 106 (PEAFFY) are extracellular. A helical membrane pass occupies residues 107–124 (GMAVFSVAHLLYLWAFGL). Residues 125 to 130 (SPLQPG) are Cytoplasmic-facing. The helical transmembrane segment at 131–147 (LLLCTTLASLTYYSFLL) threads the bilayer. Topologically, residues 148-153 (LHLEPN) are extracellular. A helical membrane pass occupies residues 154-170 (MVLPVAAYGLILNTMLW). At 171-178 (RGLVLGRS) the chain is on the cytoplasmic side. A helical membrane pass occupies residues 179 to 195 (AGWGAVLFIFSDGVLAW). The Extracellular segment spans residues 196-206 (DTFVYTLPFAR). Residues 207–225 (LVTMSTYYAAQLLLTLSAL) traverse the membrane as a helical segment. Residues 226 to 233 (RSPGLKTH) are Cytoplasmic-facing.

Belongs to the TMEM86 family. In terms of assembly, homodimer.

It is found in the endoplasmic reticulum membrane. The protein localises to the cytoplasm. The catalysed reaction is a 1-O-(1Z-alkenyl)-sn-glycero-3-phosphocholine + H2O = a 2,3-saturated aldehyde + sn-glycerol 3-phosphocholine. The enzyme catalyses a 1-O-(1Z-alkenyl)-sn-glycero-3-phosphoethanolamine + H2O = a 2,3-saturated aldehyde + sn-glycero-3-phosphoethanolamine. Its activity is regulated as follows. Competitively inhibited by lysophosphatidic acid. Catalyzes the hydrolysis of the vinyl ether bond of choline or ethanolamine lysoplasmalogens, forming fatty aldehyde and glycerophosphocholine or glycerophosphoethanolamine, respectively and is specific for the sn-2-deacylated (lyso) form of plasmalogen. This Rattus norvegicus (Rat) protein is Lysoplasmalogenase TMEM86B (Tmem86b).